A 345-amino-acid polypeptide reads, in one-letter code: MITIVSTENDALSAQLAAAINNKTKPLGSLGMLETLARQIGLIQQTTQAQIIDPALIVFAADHGIVAENVSAYPQSVTWQMVENFLAGGAAINVFARQNHCALHIVDAGVNHDFGRREGLLDRKVAYGTRNFAQETAMSAEQCAQAVQAGMDLAAGIKGNVLGFGEMGIGNTTAAAAIMQAMTKLPAAECVGAGTGLAHEGILHKQKVVQDAVAYHAAIVAKNAPLDILATFGGFEIAMIVGAMLKAAERRMVLLIDGFIITSALMIAARLQPSILDYCVFAHCSDEHGHRQMISHLGGRPVLQMGLRLGEGTGSVLALPLLHAAVNFLREMATFESADVSQQNA.

The Proton acceptor role is filled by Glu311.

This sequence belongs to the CobT family.

The enzyme catalyses 5,6-dimethylbenzimidazole + nicotinate beta-D-ribonucleotide = alpha-ribazole 5'-phosphate + nicotinate + H(+). It participates in nucleoside biosynthesis; alpha-ribazole biosynthesis; alpha-ribazole from 5,6-dimethylbenzimidazole: step 1/2. Functionally, catalyzes the synthesis of alpha-ribazole-5'-phosphate from nicotinate mononucleotide (NAMN) and 5,6-dimethylbenzimidazole (DMB). The protein is Nicotinate-nucleotide--dimethylbenzimidazole phosphoribosyltransferase of Janthinobacterium sp. (strain Marseille) (Minibacterium massiliensis).